Consider the following 83-residue polypeptide: MSQTFTKSQVAEHKDDKSMYIIIDDGVYDITNFLDDHPGGAKILKRMAGKDATKSFWKYHGKSVLEKYGTKLKVGTLAEAAKL.

In terms of domain architecture, Cytochrome b5 heme-binding spans 2–78 (SQTFTKSQVA…GTKLKVGTLA (77 aa)). The heme site is built by His37 and His60.

The protein belongs to the cytochrome b5 family.

This chain is Putative cytochrome b5 B11H24.095, found in Neurospora crassa (strain ATCC 24698 / 74-OR23-1A / CBS 708.71 / DSM 1257 / FGSC 987).